We begin with the raw amino-acid sequence, 122 residues long: NADH-quinone oxidoreductase subunit A (122 aa).

3 helical membrane-spanning segments follow: residues 12 to 32, 67 to 87, and 91 to 111; these read ILLFILVGLAIGVLSMLAGWL, IAILFILFDLEIAFLFPWAVV, and IGWFGFVAMLVFLGLLVVGFI.

It belongs to the complex I subunit 3 family. As to quaternary structure, NDH-1 is composed of 14 different subunits. Subunits NuoA, H, J, K, L, M, N constitute the membrane sector of the complex.

The protein resides in the cell inner membrane. The enzyme catalyses a quinone + NADH + 5 H(+)(in) = a quinol + NAD(+) + 4 H(+)(out). Its function is as follows. NDH-1 shuttles electrons from NADH, via FMN and iron-sulfur (Fe-S) centers, to quinones in the respiratory chain. The immediate electron acceptor for the enzyme in this species is believed to be ubiquinone. Couples the redox reaction to proton translocation (for every two electrons transferred, four hydrogen ions are translocated across the cytoplasmic membrane), and thus conserves the redox energy in a proton gradient. The polypeptide is NADH-quinone oxidoreductase subunit A (Nitrosomonas europaea (strain ATCC 19718 / CIP 103999 / KCTC 2705 / NBRC 14298)).